The sequence spans 466 residues: Trigger factor (466 aa).

The PPIase FKBP-type domain occupies 166–245 (GDFAQIDLVA…LNAVKERELP (80 aa)). Disordered stretches follow at residues 313–332 (LEQE…TESS) and 424–466 (LPDD…AADK). The span at 426 to 444 (DDGEAVDEDATPEDTDAPA) shows a compositional bias: acidic residues. The segment covering 453-466 (PKKKAAAKKKAADK) has biased composition (basic residues).

Belongs to the FKBP-type PPIase family. Tig subfamily.

The protein localises to the cytoplasm. The enzyme catalyses [protein]-peptidylproline (omega=180) = [protein]-peptidylproline (omega=0). In terms of biological role, involved in protein export. Acts as a chaperone by maintaining the newly synthesized protein in an open conformation. Functions as a peptidyl-prolyl cis-trans isomerase. The sequence is that of Trigger factor from Leifsonia xyli subsp. xyli (strain CTCB07).